The primary structure comprises 293 residues: Deubiquitinase OTUD6B (293 aa).

At Met1 the chain carries N-acetylmethionine. The 138-residue stretch at 147-284 (LEIKQIPSDG…GEHYNSVTRL (138 aa)) folds into the OTU domain. A cys-loop region spans residues 152 to 158 (IPSDGHC). Asp155 is an active-site residue. The active-site Nucleophile is Cys158. Positions 219–229 (IVNTAAWGGQL) are variable-loop. The segment at 267-277 (YMRHAYGLGEH) is his-loop. His277 is an active-site residue.

Interacts with the eukaryotic translation initiation factor 4F complex.

The catalysed reaction is Thiol-dependent hydrolysis of ester, thioester, amide, peptide and isopeptide bonds formed by the C-terminal Gly of ubiquitin (a 76-residue protein attached to proteins as an intracellular targeting signal).. Functionally, deubiquitinating enzyme that may play a role in the ubiquitin-dependent regulation of protein synthesis, downstream of mTORC1. May associate with the protein synthesis initiation complex and modify its ubiquitination to repress translation. May also repress DNA synthesis and modify different cellular targets thereby regulating cell growth and proliferation. May also play a role in proteasome assembly and function. In terms of biological role, stimulates protein synthesis. Influences the expression of CCND1/cyclin D1 by promoting its translation and regulates MYC/c-Myc protein stability. The protein is Deubiquitinase OTUD6B of Homo sapiens (Human).